Consider the following 135-residue polypeptide: MVKFLKQNKAVILLQGRYAGKKAVIIKSFDDGNRDRPYGHCLVAGLKKYPSKVIRKDSAKKTAKKSRVKCFIKLVNYQHLMPTRYTLDVDLKEVATLDALQSKDKKVAALKEAKAKLEERFKTGKNRWFFTKLRF.

The protein belongs to the eukaryotic ribosomal protein eL27 family.

The protein is Large ribosomal subunit protein eL27x (RPL27C) of Arabidopsis thaliana (Mouse-ear cress).